The chain runs to 301 residues: MKLNGVFTALATPFRDDLSLDERALASFVDWQISSGISGIVPCGTTGESATLNFEEYCTVVRLCIETARGRILVIAGAGSHCTTETISRALFVQSAGADAALIVVPYYNRPSDEGVYQHFRAVHDATNIPIVLYNVPQRTAIDISNDTIRRIAELPRVVGIKDCTGAERVAALKAILPEKVAILSGEDETALASYMNGGSGCISVVSNVAPKMAVELYRLHALGKINMAKQVSGNLAALSRVLFIEPSPSPTKYALSLMGKMRPKVRLPLVELTSSGQTAVKNVLETLDLLRQQKAMHSQL.

Threonine 46 is a pyruvate binding site. Tyrosine 134 functions as the Proton donor/acceptor in the catalytic mechanism. Lysine 162 (schiff-base intermediate with substrate) is an active-site residue. Residue isoleucine 203 coordinates pyruvate.

This sequence belongs to the DapA family. Homotetramer; dimer of dimers.

The protein localises to the cytoplasm. The enzyme catalyses L-aspartate 4-semialdehyde + pyruvate = (2S,4S)-4-hydroxy-2,3,4,5-tetrahydrodipicolinate + H2O + H(+). It functions in the pathway amino-acid biosynthesis; L-lysine biosynthesis via DAP pathway; (S)-tetrahydrodipicolinate from L-aspartate: step 3/4. Its function is as follows. Catalyzes the condensation of (S)-aspartate-beta-semialdehyde [(S)-ASA] and pyruvate to 4-hydroxy-tetrahydrodipicolinate (HTPA). The sequence is that of 4-hydroxy-tetrahydrodipicolinate synthase from Anaplasma marginale (strain St. Maries).